Consider the following 407-residue polypeptide: MAPHLNIVPSMFVLLLLFISASKVQPDAFDVVAKFGAKADGKTDLSKPFLDAWKEACASVTPSTVVIPKGTYLLSKVNLEGPCKAPIEINVQGTIQAPADPSAFKDPNWVRFYSVENFKMFGGGIFDGQGSIAYEKNTCENREFRSKLPVNIRFDFVTNALIQDITSKDSKLFHINVFACKNITLERLKIEAPDESPNTDGIHMGKSEGVNIIASDIKTGDDCISIGDGTKNMVIKEITCGPGHGISIGSLGKFQNEEPVEGIKISNCTITNTSNGARIKTWPGEHGGAVSEIHFEDITMNNVSSPILIDQQYCPWNKCKKNEESKVKLSNISFKNIRGTSALPEAIKFICSGSSPCQNVELADIDIQHNGAEPATSQCLNVKPITIGKLNPIPCSGPVPKTPSATA.

Positions 1–26 (MAPHLNIVPSMFVLLLLFISASKVQP) are cleaved as a signal peptide. 2 PbH1 repeats span residues 180-206 (CKNITLERLKIEAPDESPNTDGIHMGK) and 207-228 (SEGVNIIASDIKTGDDCISIGD). Asparagine 182 carries an N-linked (GlcNAc...) asparagine glycan. The active-site Proton donor is aspartate 221. A disulfide bridge connects residues cysteine 223 and cysteine 240. Residue histidine 244 is part of the active site. 2 PbH1 repeats span residues 260-281 (VEGIKISNCTITNTSNGARIKT) and 290-311 (VSEIHFEDITMNNVSSPILIDQ). Asparagine 267, asparagine 272, asparagine 302, and asparagine 331 each carry an N-linked (GlcNAc...) asparagine glycan. Disulfide bonds link cysteine 351–cysteine 357 and cysteine 379–cysteine 395. The PbH1 5 repeat unit spans residues 357-384 (CQNVELADIDIQHNGAEPATSQCLNVKP).

It belongs to the glycosyl hydrolase 28 family. Pollen.

The protein resides in the secreted. The protein localises to the cell wall. It catalyses the reaction (1,4-alpha-D-galacturonosyl)n+m + H2O = (1,4-alpha-D-galacturonosyl)n + (1,4-alpha-D-galacturonosyl)m.. May function in the depolymerization of the pectin in its walls during pollen tube elongation, or in that of the pistil during pollination. The chain is Polygalacturonase (G9) from Gossypium barbadense (Sea Island cotton).